A 380-amino-acid polypeptide reads, in one-letter code: Guanine nucleotide-binding protein alpha-1 subunit (380 aa).

Positions methionine 1 to isoleucine 25 are disordered. Glycine 2 carries N-myristoyl glycine lipidation. Cysteine 5 carries the S-palmitoyl cysteine lipid modification. A compositionally biased stretch (basic and acidic residues) spans serine 10–isoleucine 25. The G-alpha domain occupies histidine 38–threonine 380. Residues lysine 41–threonine 54 form a G1 motif region. The GTP site is built by glutamate 49, serine 50, glycine 51, lysine 52, serine 53, threonine 54, aspartate 163, leucine 188, tyrosine 189, threonine 194, glycine 222, asparagine 288, lysine 289, aspartate 291, and alanine 356. Serine 53 provides a ligand contact to Mg(2+). The segment at aspartate 186 to threonine 194 is G2 motif. Residue threonine 194 coordinates Mg(2+). Positions tyrosine 215–arginine 224 are G3 motif. The G4 motif stretch occupies residues isoleucine 284–aspartate 291. Positions threonine 354–glutamine 359 are G5 motif.

This sequence belongs to the G-alpha family. As to quaternary structure, g proteins are composed of 3 units; alpha, beta and gamma. The alpha chain contains the guanine nucleotide binding site. Interacts with COLD1. The cofactor is Mg(2+).

It is found in the cell membrane. Guanine nucleotide-binding proteins (G proteins) are involved as modulators or transducers in various transmembrane signaling systems. May function in a signal transduction pathway required for normal growth and development of internodes, leaves, panicles and seeds. Involved in gibberellin signal transduction. Involved in R gene-mediated disease resistance. Functions upstream of the small GTPase RAC1 in the early steps of signaling. Involved in brassinosteroid response. May not be a signaling molecule in BRI1-mediated perception or transduction. This chain is Guanine nucleotide-binding protein alpha-1 subunit (GPA1), found in Oryza sativa subsp. indica (Rice).